The following is a 517-amino-acid chain: Golgi-associated kinase 1B (517 aa).

Residues 1-36 lie on the Cytoplasmic side of the membrane; the sequence is MTCPDKPGQLVNWFVCSLCAPRVCKLWSSRRPRTRR. Residues 37-56 form a helical; Signal-anchor for type II membrane protein membrane-spanning segment; it reads NLLLGTACAIYLGFLVSQVG. Topologically, residues 57-517 are extracellular; the sequence is RGSFQHGQAT…HGARVLPMNE (461 aa). N-linked (GlcNAc...) asparagine glycans are attached at residues Asn-98 and Asn-287.

It belongs to the GASK family.

Its subcellular location is the golgi apparatus membrane. This chain is Golgi-associated kinase 1B, found in Mus musculus (Mouse).